A 209-amino-acid polypeptide reads, in one-letter code: Probable glutathione peroxidase 8-B (209 aa).

A helical membrane pass occupies residues 18–40; the sequence is VFLVFFSMVLCTGILCVLQLKFL. Residue Cys79 is part of the active site.

It belongs to the glutathione peroxidase family.

It localises to the membrane. It carries out the reaction 2 glutathione + H2O2 = glutathione disulfide + 2 H2O. In Xenopus laevis (African clawed frog), this protein is Probable glutathione peroxidase 8-B (gpx8-b).